Here is an 89-residue protein sequence, read N- to C-terminus: Arminin 7519 (89 aa).

Residues 1–18 (MRSTFAVLFLALIALTYS) form the signal peptide. A propeptide spanning residues 19–59 (KNYQDVKEEIKNEVENEILRDLGEDDDELDDNAQEAVNDAR) is cleaved from the precursor. At Ala86 the chain carries Alanine amide.

It belongs to the arminin family. As to expression, expressed in entodermal epithelium along the body column.

The protein resides in the secreted. The protein localises to the target cell membrane. In terms of biological role, antimicrobial peptide with a broad-spectrum antimicrobial activity. Keeps its antibacterial activity under a wide range of salt concentrations that mimic physiological conditions of human blood, which is surprising, since Hydra is an obligate freshwater animal with nearly no salt tolerance. Does not affect red blood cells. The protein is Arminin 7519 of Hydra vulgaris (Hydra).